Here is a 367-residue protein sequence, read N- to C-terminus: Probable butyrate kinase (367 aa).

Belongs to the acetokinase family.

It is found in the cytoplasm. It carries out the reaction butanoate + ATP = butanoyl phosphate + ADP. The chain is Probable butyrate kinase from Exiguobacterium sibiricum (strain DSM 17290 / CCUG 55495 / CIP 109462 / JCM 13490 / 255-15).